A 339-amino-acid chain; its full sequence is MTIKVSIDASGGDYGISVTIKAGIKALDVFQDLYLYFVGDESSIKAELNKHLSNTFSSRYTIIHASEVVLMNESPAIALRKKKDSSMRVAINLVKTLKVNACVSAGNTGALMAISRFVLRTIKGIDRPAIMGRMPTMIGHTHMLDLGANVDSKPEALIEFATMGSIAVKHIENIVSPTIGLLNIGEEDMKGSEKIKKTAELLKASNLNYVGFVEGDDIYKGTVNLIVCDGFEGNIALKASEGVVLMMGYYLKQAFTRNLLTKLVALIATPVLRDFKSSLNPGKYNGASLLGLQGIVVKSHGSANVDSFLAAITEAYVEAHAKISDKISLQISKELEHNE.

Belongs to the PlsX family. Homodimer. Probably interacts with PlsY.

It is found in the cytoplasm. It carries out the reaction a fatty acyl-[ACP] + phosphate = an acyl phosphate + holo-[ACP]. The protein operates within lipid metabolism; phospholipid metabolism. Functionally, catalyzes the reversible formation of acyl-phosphate (acyl-PO(4)) from acyl-[acyl-carrier-protein] (acyl-ACP). This enzyme utilizes acyl-ACP as fatty acyl donor, but not acyl-CoA. The polypeptide is Phosphate acyltransferase (Ruthia magnifica subsp. Calyptogena magnifica).